The sequence spans 627 residues: Myelin-associated glycoprotein (627 aa).

The signal sequence occupies residues 1-19 (MIFLATLPLFWIMISASRG). The interaction with RTN4R and RTN4RL2 stretch occupies residues 20–325 (GHWGAWMPST…RTVELSVMYA (306 aa)). At 20–516 (GHWGAWMPST…HRLMWAKIGP (497 aa)) the chain is on the extracellular side. C-linked (Man) tryptophan glycosylation occurs at W22. In terms of domain architecture, Ig-like V-type spans 22-120 (WGAWMPSTIS…LGGKYYFRGD (99 aa)). 3 disulfides stabilise this stretch: C37–C165, C42–C100, and C159–C217. A ganglioside GT1b (d18:1(4E)) is bound at residue 65–67 (YPK). N99 carries N-linked (GlcNAc...) asparagine glycosylation. A ganglioside GT1b (d18:1(4E))-binding positions include R118 and 124 to 128 (YNQYT). Ig-like C2-type domains are found at residues 139 to 237 (NTPN…LDVK), 241 to 325 (VIVE…VMYA), 327 to 412 (WKPT…VEFA), and 413 to 508 (PIIL…GAHR). N-linked (GlcNAc...) asparagine glycans are attached at residues N223 and N246. C261 and C305 are joined by a disulfide. 2 N-linked (GlcNAc...) asparagine glycosylation sites follow: N315 and N332. A disulfide bridge connects residues C347 and C392. N-linked (GlcNAc...) asparagine glycosylation is present at N406. Intrachain disulfides connect C421/C430 and C432/C488. N-linked (GlcNAc...) asparagine glycosylation is found at N450 and N454. A helical transmembrane segment spans residues 517–536 (VGAVVAFAILIAIVCYITQT). The S-palmitoyl cysteine moiety is linked to residue C531. The Cytoplasmic portion of the chain corresponds to 537–627 (RRKKNVTESS…LAEYAEIRVK (91 aa)). Residues S545, S547, S549, and S591 each carry the phosphoserine modification. Residues 578 to 627 (LGSERRLLGLRGESPELDLSYSHSDLGKRPTKDSYTLTEELAEYAEIRVK) are required for normal axon myelination in the central nervous system.

The protein belongs to the immunoglobulin superfamily. SIGLEC (sialic acid binding Ig-like lectin) family. As to quaternary structure, monomer and homodimer. Interacts (via the first three N-terminal Ig-like domains) with RTN4R and RTN4RL2. Interacts with isoform 2 of BSG. Post-translationally, N-glycosylated. Phosphorylated on tyrosine residues. In terms of processing, ubiquitinated, leading to proteasomal degradation. Detected in the myelin tract in brain, especially in the corpus callosum and in peripheral nerve. Expressed by myelinating glial cells in the central and peripheral nervous system. Detected in oligodendrocyte processes before formation of compact myelin. Restricted to the periaxonal space after myelination. Isoform S-MAG is the predominant isoform in CNS and PNS of the adult (at protein level).

The protein localises to the cell membrane. It is found in the membrane raft. In terms of biological role, adhesion molecule that mediates interactions between myelinating cells and neurons by binding to neuronal sialic acid-containing gangliosides and to the glycoproteins RTN4R and RTN4RL2. Not required for initial myelination, but seems to play a role in the maintenance of normal axon myelination. Protects motoneurons against apoptosis, also after injury; protection against apoptosis is probably mediated via interaction with neuronal RTN4R and RTN4RL2. Required to prevent degeneration of myelinated axons in adults; this probably depends on binding to gangliosides on the axon cell membrane. Negative regulator of neurite outgrowth that inhibits axon longitudinal growth. Negative regulator of neurite outgrowth; in dorsal root ganglion neurons the inhibition is mediated primarily via binding to neuronal RTN4R or RTN4RL2 and to a lesser degree via binding to neuronal gangliosides. In cerebellar granule cells the inhibition is mediated via binding to neuronal gangliosides. In sensory neurons, inhibition of neurite extension depends only partially on RTN4R, RTN4RL2 and gangliosides. Inhibits axon outgrowth by binding to RTN4R. Preferentially binds to alpha-2,3-linked sialic acid. Binds ganglioside Gt1b. This chain is Myelin-associated glycoprotein (Mag), found in Mus musculus (Mouse).